A 328-amino-acid chain; its full sequence is LOB domain-containing protein 27 (328 aa).

One can recognise an LOB domain in the interval 35-136 (GACAACKYQR…EELKAVNSQL (102 aa)).

Belongs to the LOB domain-containing protein family.

This Arabidopsis thaliana (Mouse-ear cress) protein is LOB domain-containing protein 27 (LBD27).